Consider the following 364-residue polypeptide: NF-kappa-B inhibitor epsilon (364 aa).

Positions 1 to 108 are disordered; it reads MSDARKGPDE…GSPLPPAGVL (108 aa). Phosphoserine is present on S18. A compositionally biased stretch (low complexity) spans 36–48; sequence PGSGSSQSGCPQP. Over residues 51–70 the composition is skewed to basic and acidic residues; it reads HAPETHKEPEKEDADGERAD. Residues 93–104 show a composition bias toward pro residues; that stretch reads PSPPAPGSPLPP. ANK repeat units follow at residues 122–155, 157–186, 190–219, 233–262, 267–296, and 300–329; these read DGDT…DIQN, LYQT…SRIL, HGDT…EPGR, QGLA…DIDV, SGKT…RVDA, and NGCT…DSLL.

The protein belongs to the NF-kappa-B inhibitor family. In terms of assembly, interacts with RELA, REL, NFKB1 nuclear factor NF-kappa-B p50 subunit and NFKB2 nuclear factor NF-kappa-B p52 subunit. Interacts with HNRNPA2B1; the interaction may be mediated by the RRM2 domain of HNRNPA2B1, and HNRNPA2B1 may interact simultaneously with FAM76B and either NFKBIA or NFKBIE to form a complex. In terms of processing, serine phosphorylated; followed by proteasome-dependent degradation.

It localises to the cytoplasm. In terms of biological role, sequesters NF-kappa-B transcription factor complexes in the cytoplasm, thereby inhibiting their activity. Sequestered complexes include NFKB1/p50-RELA/p65 and NFKB1/p50-REL/c-Rel complexes. Limits B-cell activation in response to pathogens, and also plays an important role in B-cell development. This chain is NF-kappa-B inhibitor epsilon (Nfkbie), found in Mus musculus (Mouse).